The sequence spans 505 residues: Acetyl-coenzyme A carboxylase carboxyl transferase subunit beta, chloroplastic (505 aa).

Over residues 189-205 the composition is skewed to low complexity; the sequence is ESVSNSKSGSSSIRTGG. Positions 189-213 are disordered; that stretch reads ESVSNSKSGSSSIRTGGNSSDFNRR. One can recognise a CoA carboxyltransferase N-terminal domain in the interval 228–499; it reads LWVQCENCYG…NQNSSRALGS (272 aa). Zn(2+) contacts are provided by C232, C235, C251, and C254. Residues 232 to 254 form a C4-type zinc finger; that stretch reads CENCYGLNYKKFVSFKMHICEQC.

Belongs to the AccD/PCCB family. As to quaternary structure, acetyl-CoA carboxylase is a heterohexamer composed of biotin carboxyl carrier protein, biotin carboxylase and 2 subunits each of ACCase subunit alpha and ACCase plastid-coded subunit beta (accD). The cofactor is Zn(2+).

The protein localises to the plastid. It is found in the chloroplast stroma. It carries out the reaction N(6)-carboxybiotinyl-L-lysyl-[protein] + acetyl-CoA = N(6)-biotinyl-L-lysyl-[protein] + malonyl-CoA. Its pathway is lipid metabolism; malonyl-CoA biosynthesis; malonyl-CoA from acetyl-CoA: step 1/1. In terms of biological role, component of the acetyl coenzyme A carboxylase (ACC) complex. Biotin carboxylase (BC) catalyzes the carboxylation of biotin on its carrier protein (BCCP) and then the CO(2) group is transferred by the transcarboxylase to acetyl-CoA to form malonyl-CoA. The sequence is that of Acetyl-coenzyme A carboxylase carboxyl transferase subunit beta, chloroplastic from Calycanthus floridus var. glaucus (Eastern sweetshrub).